A 197-amino-acid chain; its full sequence is A-type ATP synthase subunit E 2 (197 aa).

The protein belongs to the V-ATPase E subunit family. As to quaternary structure, has multiple subunits with at least A(3), B(3), C, D, E, F, H, I and proteolipid K(x).

The protein localises to the cell membrane. Component of the A-type ATP synthase that produces ATP from ADP in the presence of a proton gradient across the membrane. This chain is A-type ATP synthase subunit E 2, found in Methanospirillum hungatei JF-1 (strain ATCC 27890 / DSM 864 / NBRC 100397 / JF-1).